A 298-amino-acid polypeptide reads, in one-letter code: Acetylglutamate kinase (298 aa).

Residues 69–70, R91, and N196 each bind substrate; that span reads GG.

The protein belongs to the acetylglutamate kinase family. ArgB subfamily.

Its subcellular location is the cytoplasm. The enzyme catalyses N-acetyl-L-glutamate + ATP = N-acetyl-L-glutamyl 5-phosphate + ADP. It functions in the pathway amino-acid biosynthesis; L-arginine biosynthesis; N(2)-acetyl-L-ornithine from L-glutamate: step 2/4. Functionally, catalyzes the ATP-dependent phosphorylation of N-acetyl-L-glutamate. This Granulibacter bethesdensis (strain ATCC BAA-1260 / CGDNIH1) protein is Acetylglutamate kinase.